The sequence spans 131 residues: uncharacterized protein (131 aa).

A Response regulatory domain is found at 8-124 (DILVVDDDPD…ELIRLVQQYC (117 aa)). 4-aspartylphosphate is present on D57.

This is an uncharacterized protein from Leptolyngbya boryana (Plectonema boryanum).